The following is a 144-amino-acid chain: Protein cornichon (144 aa).

Over 1-10 (MAFNFTAFTY) the chain is Lumenal. Residues 1 to 57 (MAFNFTAFTYIVALIGDAFLIFFAIFHVIAFDELKTDYKNPIDQCNSLNPLVLPEYL) form an interaction with grk region. Residues 11–31 (IVALIGDAFLIFFAIFHVIAF) form a helical membrane-spanning segment. At 32 to 56 (DELKTDYKNPIDQCNSLNPLVLPEY) the chain is on the cytoplasmic side. A helical transmembrane segment spans residues 57–77 (LLHLFLNLLFLFCGEWYSLCL). The Lumenal portion of the chain corresponds to 78-122 (NIPLIAYHIWRYKNRPLMSGPGLYDPTTVLKTDTLSRNLREGWIK). A helical transmembrane segment spans residues 123–143 (LAVYLISFFYYIYGMVYSLIS). A topological domain (cytoplasmic) is located at residue threonine 144.

It belongs to the cornichon family. As to quaternary structure, interacts with grk.

The protein resides in the endoplasmic reticulum membrane. Its function is as follows. Acts as a cargo receptor necessary for the transportation of gurken (grk) to a transitional endoplasmic reticulum (tER) site and promotes its incorporation into coat protein complex II (COPII) vesicles. Associated with gurken, produces a signal received by torpedo resulting in a signaling pathway that first establishes posterior follicle cell fates and normal localization of the anterior and posterior determinants, later they act in a signaling event inducing dorsal follicle cell fates and regulating the dorsal-ventral pattern of egg and embryo. This is Protein cornichon (cni) from Drosophila virilis (Fruit fly).